We begin with the raw amino-acid sequence, 413 residues long: N5-carboxyaminoimidazole ribonucleotide synthase (413 aa).

The interval 1–21 (MKRVSEQAGNPDGNPQAHVPG) is disordered. Residues lysine 122, lysine 162, 199-202 (EEKV), glutamate 207, and 289-290 (NE) contribute to the ATP site. The region spanning 126–319 (RERLAELGAP…QFEQHLRAVM (194 aa)) is the ATP-grasp domain.

This sequence belongs to the PurK/PurT family. Homodimer.

It catalyses the reaction 5-amino-1-(5-phospho-beta-D-ribosyl)imidazole + hydrogencarbonate + ATP = 5-carboxyamino-1-(5-phospho-D-ribosyl)imidazole + ADP + phosphate + 2 H(+). Its pathway is purine metabolism; IMP biosynthesis via de novo pathway; 5-amino-1-(5-phospho-D-ribosyl)imidazole-4-carboxylate from 5-amino-1-(5-phospho-D-ribosyl)imidazole (N5-CAIR route): step 1/2. Catalyzes the ATP-dependent conversion of 5-aminoimidazole ribonucleotide (AIR) and HCO(3)(-) to N5-carboxyaminoimidazole ribonucleotide (N5-CAIR). The sequence is that of N5-carboxyaminoimidazole ribonucleotide synthase from Corynebacterium ammoniagenes (Brevibacterium ammoniagenes).